The sequence spans 822 residues: Protein smoothened (822 aa).

The N-terminal stretch at 1 to 28 (MSSKRPCSIVGSFWMLWIWTATSMVARA) is a signal peptide. The Extracellular portion of the chain corresponds to 29-212 (VILHPNETIF…EDEHSDMHSY (184 aa)). Residue asparagine 34 is glycosylated (N-linked (GlcNAc...) asparagine). Cystine bridges form between cysteine 42-cysteine 157, cysteine 48-cysteine 112, cysteine 56-cysteine 105, cysteine 96-cysteine 132, and cysteine 125-cysteine 147. The FZ domain maps to 43–160 (KKSTTCEVLK…EQFPKGCQNE (118 aa)). Cholesterol is bound at residue aspartate 73. N-linked (GlcNAc...) asparagine glycosylation occurs at asparagine 167. Intrachain disulfides connect cysteine 172/cysteine 192, cysteine 196/cysteine 274, and cysteine 293/cysteine 369. The chain crosses the membrane as a helical span at residues 213–233 (IAVFGTITLLCTFFTLATFLA). At 234-241 (DWKNSNRY) the chain is on the cytoplasmic side. Residues 242–262 (PAVILFYVNACFFIGSIGWLA) traverse the membrane as a helical segment. Residues 263–293 (QFMDGARNEIVCKSDNTMRLGEPSSTETLSC) are Extracellular-facing. The helical transmembrane segment at 294 to 314 (VIIFVIVYYSLMSGVIWFVML) threads the bilayer. Residues 315–335 (TYAWHTSFKALGTTHQPLSGK) are Cytoplasmic-facing. The chain crosses the membrane as a helical span at residues 336–356 (TSYFHLVTWSIPFILTVAILA). Residues 357-381 (NSQVDADSVSGICFVGYRYYEYRAG) lie on the Extracellular side of the membrane. Tyrosine 373 contacts cholesterol. Residues 382-402 (FVLAPIGFVLVIGGYFLIRGV) traverse the membrane as a helical segment. Topologically, residues 403 to 430 (MTLFSIKSNHPGLLSEKAASKINETMLR) are cytoplasmic. The helical transmembrane segment at 431-451 (LGIFGFLAFGFVLITFGCHFY) threads the bilayer. Residues 452 to 503 (DFFNQAEWERSFREYVLCEANVTIAHQTNKPIPECAIKNRPSLLVGKINLFS) lie on the Extracellular side of the membrane. An intrachain disulfide couples cysteine 469 to cysteine 486. A glycan (N-linked (GlcNAc...) asparagine) is linked at asparagine 472. A helical transmembrane segment spans residues 504-524 (MFGTGIAMSTWVWTKATILIW). The Cytoplasmic segment spans residues 525-822 (KRTWFRIIGR…AELLDADSDF (298 aa)). Residues 645 to 687 (MMKRKKKKKKRRKEVRPAGPAADEGNPAYHRREFGPSAVPRLP) form a disordered region. The span at 647–658 (KRKKKKKKRRKE) shows a compositional bias: basic residues.

Belongs to the G-protein coupled receptor Fz/Smo family. In terms of assembly, monomer.

Its subcellular location is the cell membrane. It is found in the cell projection. The protein localises to the cilium. Its function is as follows. G protein-coupled receptor which associates with the patched protein (ptch) to transduce Hedgehog protein signaling. Binding of sonic hedgehog (shh) to its receptor patched prevents inhibition of smoothened (smo) by patched. When active, smo binds to and sequesters protein kinase A catalytic subunit prkaca at the cell membrane, preventing prkaca-mediated phosphorylation of gli transcription factors which releases the gli proteins from prkaca-mediated inhibition and allows for transcriptional activation of Hedgehog signaling pathway target genes. Required for the development of primary and secondary motoneurons but not for the specification of midbrain dopaminergic neurons or development of the medial floor plate. Required for induction of lateral floor plate and posterior motoneurons, anterior neural plate patterning, dorsoventral forebrain patterning, dorsoventral retinal patterning, optic stalk development, and formation of the forebrain primary axonal scaffold. Required to regulate the formation of a subset of cerebellar neurons by limiting wnt1 expression which controls cerebellar expression of transcription factor olig2. Required for development of the pancreas. Required for muscle development. Required for the formation of a single continuous intestinal lumen from multiple discontinuous lumens, probably by regulating remodeling through rab11a-mediated trafficking to facilitate lumen fusion. Required for development of the adenohypophysis. Required for anteroposterior patterning of the otic vesicle. Required for development of the anterior craniofacial skeleton. Required for patterning of the caudal fin. Required during gastrulation and early somitogenesis stages to promote cardiomyocyte formation by regulating the specification of myocardial progenitors. Required for induction of arterial endothelial cell formation by repressing venous cell fate. The chain is Protein smoothened from Danio rerio (Zebrafish).